Reading from the N-terminus, the 434-residue chain is Methylenetetrahydrofolate--tRNA-(uracil-5-)-methyltransferase TrmFO (434 aa).

10–15 lines the FAD pocket; the sequence is GAGLAG.

Belongs to the MnmG family. TrmFO subfamily. The cofactor is FAD.

The protein resides in the cytoplasm. The catalysed reaction is uridine(54) in tRNA + (6R)-5,10-methylene-5,6,7,8-tetrahydrofolate + NADH + H(+) = 5-methyluridine(54) in tRNA + (6S)-5,6,7,8-tetrahydrofolate + NAD(+). The enzyme catalyses uridine(54) in tRNA + (6R)-5,10-methylene-5,6,7,8-tetrahydrofolate + NADPH + H(+) = 5-methyluridine(54) in tRNA + (6S)-5,6,7,8-tetrahydrofolate + NADP(+). Catalyzes the folate-dependent formation of 5-methyl-uridine at position 54 (M-5-U54) in all tRNAs. This Bacillus cytotoxicus (strain DSM 22905 / CIP 110041 / 391-98 / NVH 391-98) protein is Methylenetetrahydrofolate--tRNA-(uracil-5-)-methyltransferase TrmFO.